A 686-amino-acid chain; its full sequence is Calponin homology and LIM domain-containing protein (686 aa).

A Calponin-homology (CH) domain is found at 15-120 (ELALDESRDW…ITLYWLGRAA (106 aa)). 2 LIM zinc-binding domains span residues 139 to 200 (MNCS…ATNL) and 219 to 279 (NKCS…SCGK). Positions 305–314 (KQVMDKDGHD) are enriched in basic and acidic residues. Residues 305 to 345 (KQVMDKDGHDHHHHNHNKPTTTTTTTNSNSPLAKKKSDSCK) are disordered. Residues 322-333 (KPTTTTTTTNSN) are compositionally biased toward low complexity. LIM zinc-binding domains follow at residues 373–435 (GTCG…NNKS), 437–495 (KNCH…LNQY), 519–579 (DRCV…IQQS), and 583–658 (DHCA…ASSS).

As to quaternary structure, interacts with limF and rab21.

Functionally, involved in the regulation of phagocytosis. May repress rab21. In Dictyostelium discoideum (Social amoeba), this protein is Calponin homology and LIM domain-containing protein (ChLim).